Here is a 160-residue protein sequence, read N- to C-terminus: Crossover junction endodeoxyribonuclease RuvC (160 aa).

Catalysis depends on residues Asp7, Glu70, and Asp142. Residues Asp7, Glu70, and Asp142 each contribute to the Mg(2+) site.

Belongs to the RuvC family. In terms of assembly, homodimer which binds Holliday junction (HJ) DNA. The HJ becomes 2-fold symmetrical on binding to RuvC with unstacked arms; it has a different conformation from HJ DNA in complex with RuvA. In the full resolvosome a probable DNA-RuvA(4)-RuvB(12)-RuvC(2) complex forms which resolves the HJ. It depends on Mg(2+) as a cofactor.

It is found in the cytoplasm. It carries out the reaction Endonucleolytic cleavage at a junction such as a reciprocal single-stranded crossover between two homologous DNA duplexes (Holliday junction).. Its function is as follows. The RuvA-RuvB-RuvC complex processes Holliday junction (HJ) DNA during genetic recombination and DNA repair. Endonuclease that resolves HJ intermediates. Cleaves cruciform DNA by making single-stranded nicks across the HJ at symmetrical positions within the homologous arms, yielding a 5'-phosphate and a 3'-hydroxyl group; requires a central core of homology in the junction. The consensus cleavage sequence is 5'-(A/T)TT(C/G)-3'. Cleavage occurs on the 3'-side of the TT dinucleotide at the point of strand exchange. HJ branch migration catalyzed by RuvA-RuvB allows RuvC to scan DNA until it finds its consensus sequence, where it cleaves and resolves the cruciform DNA. This Ehrlichia ruminantium (strain Gardel) protein is Crossover junction endodeoxyribonuclease RuvC.